The primary structure comprises 1011 residues: Probable calcium-transporting ATPase (1011 aa).

At 1–65 (MLPENLPTDP…WKLVLAQFED (65 aa)) the chain is on the cytoplasmic side. Residues 66–84 (TLVRILLLAATVSFAMAVV) traverse the membrane as a helical segment. Residues 85–90 (ENNAAD) lie on the Extracellular side of the membrane. Residues 91-110 (FVEPFIILLILILNATVGVW) form a helical membrane-spanning segment. Over 111–258 (QENRAEGAIE…QVKLDEFGVL (148 aa)) the chain is Cytoplasmic. The chain crosses the membrane as a helical span at residues 259 to 278 (LSKVIGYICLVVFAVNLVRW). Topologically, residues 279-303 (YATHKPTKNETFFTRYIQPSVHCLK) are extracellular. A helical membrane pass occupies residues 304–321 (VAVALAVAAIPEGLPAVV). At 322 to 770 (TTCLALGTRR…RYLISSNIGE (449 aa)) the chain is on the cytoplasmic side. The active-site 4-aspartylphosphate intermediate is the aspartate 357. ATP is bound at residue lysine 514. A helical transmembrane segment spans residues 771-794 (VVCILVTGLFGLPEALSPVQLLWV). Topologically, residues 795-835 (NLVTDGLPATALGFNAPDRDIMEQRPRRMEEPIVNGWLFMR) are extracellular. The chain crosses the membrane as a helical span at residues 836-856 (YMVIGVYVGLATVGGFLWWFL). At 857–885 (RHGFSWHDLTTYTACSDMTNGTCLLLANP) the chain is on the cytoplasmic side. A helical transmembrane segment spans residues 886-905 (QTARAIALSILVVVEMLNAL). Residues 906–922 (NALSENASLIVSRPSSN) are Extracellular-facing. The helical transmembrane segment at 923–942 (VWLLFAIFSSLSLHLIIMYV) threads the bilayer. Topologically, residues 943–1011 (PFFAKLFNIV…MEKAQEKKKD (69 aa)) are cytoplasmic.

This sequence belongs to the cation transport ATPase (P-type) (TC 3.A.3) family.

It is found in the flagellar pocket. It localises to the cell membrane. The catalysed reaction is Ca(2+)(in) + ATP + H2O = Ca(2+)(out) + ADP + phosphate + H(+). Functionally, this magnesium-dependent enzyme catalyzes the hydrolysis of ATP coupled with the transport of the calcium. This Trypanosoma brucei brucei protein is Probable calcium-transporting ATPase (TBA1).